Here is a 214-residue protein sequence, read N- to C-terminus: UPF0725 protein At1g19565 (214 aa).

Positions 56–92 (EEEYEPSLPSSESPTDSCHADHESPDSPKYQQPAPGE) are disordered.

This sequence belongs to the UPF0725 (EMB2204) family.

The protein is UPF0725 protein At1g19565 of Arabidopsis thaliana (Mouse-ear cress).